A 523-amino-acid polypeptide reads, in one-letter code: DNA-directed primase/polymerase protein (523 aa).

Residues arginine 78, 117-119 (DLE), and 168-172 (KFSHH) each bind substrate. Mn(2+) contacts are provided by aspartate 117 and glutamate 119. The tract at residues 203–230 (LKKSNPEAPGENRDDVEGTQAKRRKTEE) is disordered. Substrate-binding positions include 258–261 (RNFR) and lysine 267. The Zn(2+) site is built by cysteine 390, histidine 397, cysteine 417, and cysteine 422. The Zinc knuckle motif signature appears at 390-423 (CHNVKRFHKSNNIIIVVDLKEEVWYQKCHDPECR). Residues 467–477 (APAESTSTTPS) show a composition bias toward low complexity. Positions 467-523 (APAESTSTTPSEDTEGWGDWPDDPAYLRALQEVEEEEEDEDEEVPDELLLQAVNECE) are disordered. 2 stretches are compositionally biased toward acidic residues: residues 478–488 (EDTEGWGDWPD) and 498–512 (EVEE…EVPD).

Belongs to the eukaryotic-type primase small subunit family. Mn(2+) is required as a cofactor.

Its subcellular location is the nucleus. It is found in the mitochondrion matrix. The protein resides in the chromosome. The enzyme catalyses ssDNA + n NTP = ssDNA/pppN(pN)n-1 hybrid + (n-1) diphosphate.. The catalysed reaction is DNA(n) + a 2'-deoxyribonucleoside 5'-triphosphate = DNA(n+1) + diphosphate. DNA primase and DNA polymerase required to tolerate replication-stalling lesions by bypassing them. Required to facilitate mitochondrial and nuclear replication fork progression by initiating de novo DNA synthesis using dNTPs and acting as an error-prone DNA polymerase able to bypass certain DNA lesions. Shows a high capacity to tolerate DNA damage lesions such as 8oxoG and abasic sites in DNA. Provides different translesion synthesis alternatives when DNA replication is stalled: able to synthesize DNA primers downstream of lesions, such as UV lesions, R-loops and G-quadruplexes, to allow DNA replication to continue. Can also realign primers ahead of 'unreadable lesions' such as abasic sites and 6-4 photoproduct (6-4 pyrimidine-pyrimidinone), thereby skipping the lesion. Repriming avoids fork degradation while leading to accumulation of internal ssDNA gaps behind the forks. Also able to incorporate nucleotides opposite DNA lesions such as 8oxoG, like a regular translesion synthesis DNA polymerase. Also required for reinitiating stalled forks after ultraviolet (UV) damage during nuclear DNA replication. Required for mitochondrial DNA (mtDNA) synthesis and replication, by reinitiating synthesis after UV damage or in the presence of chain-terminating nucleotides. In addition to its role in DNA damage response, also required to maintain efficient nuclear and mitochondrial DNA replication in unperturbed cells. This is DNA-directed primase/polymerase protein from Danio rerio (Zebrafish).